A 372-amino-acid chain; its full sequence is sn-glycerol-3-phosphate import ATP-binding protein UgpC (372 aa).

Residues 2-233 (LDIKQLVKTY…PASTFVASFI (232 aa)) enclose the ABC transporter domain. 35–42 (GPSGCGKS) serves as a coordination point for ATP.

Belongs to the ABC transporter superfamily. sn-glycerol-3-phosphate importer (TC 3.A.1.1.3) family. As to quaternary structure, the complex is composed of two ATP-binding proteins (UgpC), two transmembrane proteins (UgpA and UgpE) and a solute-binding protein (UgpB).

It localises to the cell inner membrane. The catalysed reaction is sn-glycerol 3-phosphate(out) + ATP + H2O = sn-glycerol 3-phosphate(in) + ADP + phosphate + H(+). Functionally, part of the ABC transporter complex UgpBAEC involved in sn-glycerol-3-phosphate (G3P) import. Responsible for energy coupling to the transport system. The sequence is that of sn-glycerol-3-phosphate import ATP-binding protein UgpC from Vibrio cholerae serotype O1 (strain ATCC 39315 / El Tor Inaba N16961).